The sequence spans 556 residues: MSVSAFNRRWAAVILEALTRHGVRHVCIAPGSRSTPLTLAAAENPAFIHHTHFDERGLGHLALGLAKASKQPVAVIVTSGTAVANLYPALIEAGLTGEKLILLTADRPPELIDCGANQAIRQAGIFASHPSQTLSLPRPTQDIPARWLVSTIDNALAMLHAGALHINCPFAEPLYGDMNDTGLVWQQRLGDWWQDEKPWLREARRRESDKQRDWFFWRQKRGVVVAGRMSAEEGKKVAQWAQTLGWPLIGDVLSQTGQPLPCADLWLGNAKAVTELQQAQIVVQLGSSLTGKRLLQWQATCEPEEYWVIDNIEGRLDPAHHRGRRLVAKIADWLELHPAEKRKPWCVEIPRLAELAWQRVVAQRDTFGEAQLAHRIRDYLPEQGQLFVGNSLVVRLIDALSQLPAGYPVYSNRGASGIDGLLSTAAGVQRASAKSTLAIVGDLSALYDLNALALLRQVSAPFVLIVVNNNGGQIFSLLPTPQSKRERFYLMPQNVHFDHAAAMFNLRYHRPENWEELELALASAWRTPATTLIELVVNETDGAQTLQQLLAQVSHL.

The protein belongs to the TPP enzyme family. MenD subfamily. Homodimer. Mg(2+) is required as a cofactor. Requires Mn(2+) as cofactor. The cofactor is thiamine diphosphate.

It catalyses the reaction isochorismate + 2-oxoglutarate + H(+) = 5-enolpyruvoyl-6-hydroxy-2-succinyl-cyclohex-3-ene-1-carboxylate + CO2. The protein operates within quinol/quinone metabolism; 1,4-dihydroxy-2-naphthoate biosynthesis; 1,4-dihydroxy-2-naphthoate from chorismate: step 2/7. It functions in the pathway quinol/quinone metabolism; menaquinone biosynthesis. Functionally, catalyzes the thiamine diphosphate-dependent decarboxylation of 2-oxoglutarate and the subsequent addition of the resulting succinic semialdehyde-thiamine pyrophosphate anion to isochorismate to yield 2-succinyl-5-enolpyruvyl-6-hydroxy-3-cyclohexene-1-carboxylate (SEPHCHC). This Salmonella arizonae (strain ATCC BAA-731 / CDC346-86 / RSK2980) protein is 2-succinyl-5-enolpyruvyl-6-hydroxy-3-cyclohexene-1-carboxylate synthase.